The sequence spans 382 residues: S-adenosylmethionine synthase (382 aa).

Residue glutamate 10 coordinates Mg(2+). Histidine 16 lines the ATP pocket. Glutamate 44 is a K(+) binding site. Positions 57 and 100 each coordinate L-methionine. ATP contacts are provided by residues 166–168 (DTK), 234–237 (SGRF), aspartate 245, 251–252 (RK), alanine 268, lysine 272, and lysine 276. An L-methionine-binding site is contributed by aspartate 245. Lysine 276 provides a ligand contact to L-methionine.

This sequence belongs to the AdoMet synthase family. Mg(2+) is required as a cofactor. It depends on K(+) as a cofactor.

It carries out the reaction L-methionine + ATP + H2O = S-adenosyl-L-methionine + phosphate + diphosphate. Its pathway is amino-acid biosynthesis; S-adenosyl-L-methionine biosynthesis; S-adenosyl-L-methionine from L-methionine: step 1/1. Functionally, catalyzes the formation of S-adenosylmethionine from methionine and ATP. The reaction comprises two steps that are both catalyzed by the same enzyme: formation of S-adenosylmethionine (AdoMet) and triphosphate, and subsequent hydrolysis of the triphosphate. The polypeptide is S-adenosylmethionine synthase (sam1) (Schizosaccharomyces pombe (strain 972 / ATCC 24843) (Fission yeast)).